The chain runs to 507 residues: MEADKTSEGPPATQDAKKHPSLTVPHAEDLPEATTPESPPHLLSSQEYFQPPKVHSKTYPSLDLGTKDSEDLQDPSVSETPLKLDTANLPSTPSQSSAQSVISLERAISKIPLDDFIYENSISEVQEEPLPLSPTTDISKYEYPISDVQEEPLLLSPTTNISKYEDSISDVQEEPLEDTPTADISETEYSISDVQEEPLEPPPTADIPESEDYISDDHEEPLEPPPTADIPESSYEFISDKVPQTQVPESEPFPKHSVPEPSAQAKEAASADEEEAEEEELTGGTSKTAAAGSEHHARKKKEKRGCESRPVVPAKRAELVEMAKAMHRKQFDDQVNDLFQWEKNSSLKAIQTGIYIGWRCPHYLWDCFRIGDESKCFCGHLLKEHQIISDLSVPCSVSQCRCLMFCFIPSRPEEVGEFWLKKRATFDPKAWRAQCRCKHTHEEHAATGSHPCRHRGCYCNSFESNFLCAACDRRWEEHETFFETEETKRRGKRPYGTNTAKNRHRPF.

Disordered regions lie at residues 1-100, 154-310, and 486-507; these read MEAD…SAQS, LLSP…ESRP, and ETKR…HRPF. A compositionally biased stretch (polar residues) spans 88 to 100; it reads NLPSTPSQSSAQS. Over residues 167 to 177 the composition is skewed to acidic residues; that stretch reads SISDVQEEPLE. A compositionally biased stretch (polar residues) spans 182 to 193; it reads ADISETEYSISD. Composition is skewed to acidic residues over residues 208 to 222 and 270 to 281; these read PESE…EEPL and SADEEEAEEEEL. A Phosphoserine modification is found at Ser-270.

Belongs to the FAM221 family.

This chain is Protein FAM221B (Fam221b), found in Rattus norvegicus (Rat).